Here is an 828-residue protein sequence, read N- to C-terminus: Leucine--tRNA ligase (828 aa).

Residues 36–46 (PYPSGKIHIGH) carry the 'HIGH' region motif. The short motif at 595 to 599 (KMSKS) is the 'KMSKS' region element. Lys-598 provides a ligand contact to ATP.

It belongs to the class-I aminoacyl-tRNA synthetase family.

The protein resides in the cytoplasm. The enzyme catalyses tRNA(Leu) + L-leucine + ATP = L-leucyl-tRNA(Leu) + AMP + diphosphate. The protein is Leucine--tRNA ligase of Rickettsia typhi (strain ATCC VR-144 / Wilmington).